The following is a 515-amino-acid chain: ATP synthase subunit alpha (515 aa).

Position 171-178 (171-178 (GDRQTGKT)) interacts with ATP.

It belongs to the ATPase alpha/beta chains family. F-type ATPases have 2 components, CF(1) - the catalytic core - and CF(0) - the membrane proton channel. CF(1) has five subunits: alpha(3), beta(3), gamma(1), delta(1), epsilon(1). CF(0) has three main subunits: a(1), b(2) and c(9-12). The alpha and beta chains form an alternating ring which encloses part of the gamma chain. CF(1) is attached to CF(0) by a central stalk formed by the gamma and epsilon chains, while a peripheral stalk is formed by the delta and b chains.

Its subcellular location is the cell inner membrane. The enzyme catalyses ATP + H2O + 4 H(+)(in) = ADP + phosphate + 5 H(+)(out). Produces ATP from ADP in the presence of a proton gradient across the membrane. The alpha chain is a regulatory subunit. The chain is ATP synthase subunit alpha from Xanthomonas campestris pv. campestris (strain 8004).